Consider the following 427-residue polypeptide: Gamma-glutamyl phosphate reductase (427 aa).

The protein belongs to the gamma-glutamyl phosphate reductase family.

It is found in the cytoplasm. It carries out the reaction L-glutamate 5-semialdehyde + phosphate + NADP(+) = L-glutamyl 5-phosphate + NADPH + H(+). The protein operates within amino-acid biosynthesis; L-proline biosynthesis; L-glutamate 5-semialdehyde from L-glutamate: step 2/2. In terms of biological role, catalyzes the NADPH-dependent reduction of L-glutamate 5-phosphate into L-glutamate 5-semialdehyde and phosphate. The product spontaneously undergoes cyclization to form 1-pyrroline-5-carboxylate. The polypeptide is Gamma-glutamyl phosphate reductase (Bifidobacterium adolescentis (strain ATCC 15703 / DSM 20083 / NCTC 11814 / E194a)).